The sequence spans 196 residues: Peptidyl-tRNA hydrolase (196 aa).

Y14 contributes to the tRNA binding site. H19 acts as the Proton acceptor in catalysis. Residues Y64, N66, and N112 each contribute to the tRNA site.

This sequence belongs to the PTH family. Monomer.

It is found in the cytoplasm. The catalysed reaction is an N-acyl-L-alpha-aminoacyl-tRNA + H2O = an N-acyl-L-amino acid + a tRNA + H(+). Its function is as follows. Hydrolyzes ribosome-free peptidyl-tRNAs (with 1 or more amino acids incorporated), which drop off the ribosome during protein synthesis, or as a result of ribosome stalling. Catalyzes the release of premature peptidyl moieties from peptidyl-tRNA molecules trapped in stalled 50S ribosomal subunits, and thus maintains levels of free tRNAs and 50S ribosomes. The chain is Peptidyl-tRNA hydrolase from Methylocella silvestris (strain DSM 15510 / CIP 108128 / LMG 27833 / NCIMB 13906 / BL2).